The sequence spans 327 residues: Endochitinase CH5B (327 aa).

The first 26 residues, 1–26 (MKKNRMMIMICSVGVVWMLLVGGSYG), serve as a signal peptide directing secretion. Residues 27–67 (EQCGRQAGGALCPGGNCCSQFGWCGSTTDYCGKDCQSQCGG) form the Chitin-binding type-1 domain. 7 disulfide bridges follow: cysteine 29–cysteine 44, cysteine 38–cysteine 50, cysteine 43–cysteine 57, cysteine 61–cysteine 65, cysteine 96–cysteine 158, cysteine 169–cysteine 177, and cysteine 276–cysteine 308. Glutamate 140 functions as the Proton donor in the catalytic mechanism. Positions 317-327 (SLFLSDLVTSQ) are cleaved as a propeptide — removed in mature form.

It belongs to the glycosyl hydrolase 19 family. Chitinase class I subfamily.

It localises to the vacuole. The catalysed reaction is Random endo-hydrolysis of N-acetyl-beta-D-glucosaminide (1-&gt;4)-beta-linkages in chitin and chitodextrins.. In terms of biological role, defense against chitin-containing fungal pathogens. The chain is Endochitinase CH5B from Phaseolus vulgaris (Kidney bean).